We begin with the raw amino-acid sequence, 405 residues long: Eukaryotic initiation factor 4A (405 aa).

The Q motif motif lies at 32-60; the sequence is PTFESMGLREELLRGIFNYGFEKPSAIQQ. The 171-residue stretch at 63–233 folds into the Helicase ATP-binding domain; it reads ILPIIKGRDT…EKFMTKPVRI (171 aa). 76–83 provides a ligand contact to ATP; it reads AQSGTGKT. Residues 181-184 carry the DEAD box motif; that stretch reads DEAD. The Helicase C-terminal domain occupies 244–405; that stretch reads GIKQFFVSVE…EMPVNFASII (162 aa).

This sequence belongs to the DEAD box helicase family. eIF4A subfamily.

It localises to the cytoplasm. It carries out the reaction ATP + H2O = ADP + phosphate + H(+). Functionally, ATP-dependent RNA helicase which is a subunit of the eIF4F complex involved in cap recognition and is required for mRNA binding to ribosome. In the current model of translation initiation, eIF4A unwinds RNA secondary structures in the 5'-UTR of mRNAs which is necessary to allow efficient binding of the small ribosomal subunit, and subsequent scanning for the initiator codon. The polypeptide is Eukaryotic initiation factor 4A (tifA) (Dictyostelium discoideum (Social amoeba)).